The following is a 257-amino-acid chain: Melatonin receptor type 1A (257 aa).

At 5-22 (LASIVNDGWSLSSLHCQL) the chain is on the extracellular side. A disulfide bond links Cys20 and Cys97. The chain crosses the membrane as a helical span at residues 23–43 (SGFLMGLSVIGSVFNITGIAI). Topologically, residues 44–64 (NRYCCICHSLRYNKLYSSTNS) are cytoplasmic. A helical membrane pass occupies residues 65-85 (LCYVFLIWMLTLVAIVPNLCV). Residues 86-107 (GTLQYDPRIYSCTFTQSVSSAY) lie on the Extracellular side of the membrane. A helical transmembrane segment spans residues 108–128 (TIAVVVFHFIVPMLVVIFCYL). The Cytoplasmic segment spans residues 129 to 160 (RIWALVLQVRWRVKPDNKPKLKPQDFRNFVTM). A helical membrane pass occupies residues 161 to 181 (FVVFVLFAICWAPLNFIGLVV). Over 182 to 194 (ASEPASMAPRIPE) the chain is Extracellular. A helical transmembrane segment spans residues 195–215 (WLFVASYYMGYFNSCLNAIIY). The Cytoplasmic segment spans residues 216 to 257 (GLLNQNFRQEYRKIIVSLCTTKMFFVDSSNHVAHRIKRKPSP).

Belongs to the G-protein coupled receptor 1 family.

The protein localises to the cell membrane. High affinity receptor for melatonin. Likely to mediate the reproductive and circadian actions of melatonin. The activity of this receptor is mediated by pertussis toxin sensitive G proteins that inhibit adenylate cyclase activity. Possibly involved in sleep induction, by melatonin activation of the potassium channel KCNMA1/BK and the dissociation of G-beta and G-gamma subunits, thereby decreasing synaptic transmission. This is Melatonin receptor type 1A (MTNR1A) from Bos taurus (Bovine).